The sequence spans 244 residues: UDP-2,3-diacylglucosamine hydrolase (244 aa).

Asp-8, His-10, Asp-41, Asn-79, and His-114 together coordinate Mn(2+). 79-80 (NR) is a substrate binding site. Substrate contacts are provided by Asp-122, Lys-164, Lys-167, and His-195. Positions 195 and 197 each coordinate Mn(2+).

Belongs to the LpxH family. Requires Mn(2+) as cofactor.

It localises to the cell inner membrane. The enzyme catalyses UDP-2-N,3-O-bis[(3R)-3-hydroxytetradecanoyl]-alpha-D-glucosamine + H2O = 2-N,3-O-bis[(3R)-3-hydroxytetradecanoyl]-alpha-D-glucosaminyl 1-phosphate + UMP + 2 H(+). Its pathway is glycolipid biosynthesis; lipid IV(A) biosynthesis; lipid IV(A) from (3R)-3-hydroxytetradecanoyl-[acyl-carrier-protein] and UDP-N-acetyl-alpha-D-glucosamine: step 4/6. In terms of biological role, hydrolyzes the pyrophosphate bond of UDP-2,3-diacylglucosamine to yield 2,3-diacylglucosamine 1-phosphate (lipid X) and UMP by catalyzing the attack of water at the alpha-P atom. Involved in the biosynthesis of lipid A, a phosphorylated glycolipid that anchors the lipopolysaccharide to the outer membrane of the cell. This is UDP-2,3-diacylglucosamine hydrolase from Vibrio atlanticus (strain LGP32) (Vibrio splendidus (strain Mel32)).